The following is a 66-amino-acid chain: Metallothionein-like protein type 3 (66 aa).

The protein belongs to the metallothionein superfamily. Type 15 family.

In terms of biological role, metallothioneins have a high content of cysteine residues that bind various heavy metals. The sequence is that of Metallothionein-like protein type 3 (MT2) from Malus domestica (Apple).